The chain runs to 96 residues: MLNVSEYFDGKVKSIGFESASAGRASVGVMAEGEYTFATAQAEEMTVVSGSLKVLLTGETDWKWYQAGEAFNVPGHSEFYLQVAEPTAYLCRYLKD.

Belongs to the nucleoside phosphorylase PpnP family.

The catalysed reaction is a purine D-ribonucleoside + phosphate = a purine nucleobase + alpha-D-ribose 1-phosphate. It catalyses the reaction adenosine + phosphate = alpha-D-ribose 1-phosphate + adenine. It carries out the reaction cytidine + phosphate = cytosine + alpha-D-ribose 1-phosphate. The enzyme catalyses guanosine + phosphate = alpha-D-ribose 1-phosphate + guanine. The catalysed reaction is inosine + phosphate = alpha-D-ribose 1-phosphate + hypoxanthine. It catalyses the reaction thymidine + phosphate = 2-deoxy-alpha-D-ribose 1-phosphate + thymine. It carries out the reaction uridine + phosphate = alpha-D-ribose 1-phosphate + uracil. The enzyme catalyses xanthosine + phosphate = alpha-D-ribose 1-phosphate + xanthine. Its function is as follows. Catalyzes the phosphorolysis of diverse nucleosides, yielding D-ribose 1-phosphate and the respective free bases. Can use uridine, adenosine, guanosine, cytidine, thymidine, inosine and xanthosine as substrates. Also catalyzes the reverse reactions. In Erwinia tasmaniensis (strain DSM 17950 / CFBP 7177 / CIP 109463 / NCPPB 4357 / Et1/99), this protein is Pyrimidine/purine nucleoside phosphorylase.